The following is a 43-amino-acid chain: Protein PsbN (43 aa).

The helical transmembrane segment at 5-25 (TVLSIFISSLLLGITIYSIYI) threads the bilayer.

The protein belongs to the PsbN family.

The protein localises to the plastid. It localises to the chloroplast thylakoid membrane. Functionally, may play a role in photosystem I and II biogenesis. This Gracilaria tenuistipitata var. liui (Red alga) protein is Protein PsbN.